The primary structure comprises 377 residues: cAMP-dependent protein kinase type II regulatory subunit (377 aa).

The span at 48–69 shows a compositional bias: polar residues; sequence ERPSVSHTDQSTDDQLSVNSQD. Residues 48–78 form a disordered region; sequence ERPSVSHTDQSTDDQLSVNSQDADAEPPVMA. Phosphoserine occurs at positions 51, 58, 64, 67, and 84. Positions 81–85 match the Pseudophosphorylation motif motif; the sequence is RRKSV. Position 90 is a phosphotyrosine (Y90). 3',5'-cyclic AMP contacts are provided by residues 124 to 239, E189, R198, 242 to 362, E311, and R320; these read LFRS…LLNS and MLKA…YESQ.

It belongs to the cAMP-dependent kinase regulatory chain family. Tetramer, composed of 2 regulatory (R) and 2 catalytic (C) subunits. In the presence of cAMP it dissociates into 2 active monomeric C subunits and an R dimer. Interacts with Akap200. In terms of processing, the pseudophosphorylation site binds to the substrate-binding region of the catalytic chain but is not phosphorylated. The physiological significance of phosphorylations by other kinases is unclear. As to expression, detected in follicle cells, germline-derived cells, germline line stem cells and outer rim of ring canals of nurse cells throughout oogenesis (at protein level).

Its subcellular location is the cytoplasm. It localises to the cell membrane. In terms of biological role, regulatory subunit of the cAMP-dependent protein kinases involved in cAMP signaling in cells. Mediates membrane association by binding to anchoring proteins, such as Akap200. Might play an essential role in the regulation of neuronal activity in the brain. The sequence is that of cAMP-dependent protein kinase type II regulatory subunit (Pka-R2) from Drosophila melanogaster (Fruit fly).